Reading from the N-terminus, the 88-residue chain is UPF0367 protein syc2447_c (88 aa).

The protein belongs to the UPF0367 family.

This Synechococcus sp. (strain ATCC 27144 / PCC 6301 / SAUG 1402/1) (Anacystis nidulans) protein is UPF0367 protein syc2447_c.